The primary structure comprises 181 residues: uncharacterized protein (181 aa).

The protein belongs to the methyltransferase superfamily.

This is an uncharacterized protein from Bacillus subtilis (strain 168).